We begin with the raw amino-acid sequence, 993 residues long: Muscular LMNA-interacting protein (993 aa).

Residues 1 to 51 (MLSEQGLLSDCGNNYFQMTSCILSGSIQTTPQVSAGGSEAKPLIFTFVPTV) form an interaction with LMNA region. The disordered stretch occupies residues 71-90 (PEESSDKSPETVNRSKSNDY). Positions 80–90 (ETVNRSKSNDY) are enriched in polar residues. S146 is modified (phosphoserine). Disordered regions lie at residues 152–171 (AASRKVEQGPPGGIGTAAVR), 186–225 (VRPKTQGTDLKTSSHPEMLHGMAPQQKHGQLTSSPTTSEQ), 231–250 (PAFSFVSPTNPNTPPDPVNL), 300–322 (PHSTQLSGSNLPSSTAADPKPGL), 334–358 (SHVLSHGESPRTSSSPPSSSASLKS), 443–481 (SPASSTLTLDQKEKQTPPTPKKSLSSCSLRAGSPDQGEL), 500–582 (TPLS…IHTY), 677–711 (SALHPHCGSGTLPSRLGKSESTTPNHRSPVSTPSL), and 811–864 (LSMH…SQLT). A required for interaction with ISL1 region spans residues 161–837 (PPGGIGTAAV…GSDTVKTPTT (677 aa)). Positions 212–225 (KHGQLTSSPTTSEQ) are enriched in polar residues. Residues 300–315 (PHSTQLSGSNLPSSTA) show a composition bias toward polar residues. Over residues 343–358 (PRTSSSPPSSSASLKS) the composition is skewed to low complexity. Over residues 500 to 532 (TPLSQAPSLSPTKQASSSLASMNVERTPSPTLK) the composition is skewed to polar residues. Residues 533-563 (SNTMLSLLQTSTSSSVGLPPVPPSSSLSSLK) are compositionally biased toward low complexity. Positions 564–574 (SKQDGDLRGPE) are enriched in basic and acidic residues. Over residues 695 to 711 (SESTTPNHRSPVSTPSL) the composition is skewed to polar residues. Residues 811–822 (LSMHSSDSPSRS) are compositionally biased toward low complexity. At S818 the chain carries Phosphoserine. Residues 849 to 864 (ANLSSPSSTVSESQLT) are compositionally biased toward polar residues.

As to quaternary structure, directly interacts with LMNA. Interacts with ISL1 (via N-terminal domain); the interaction represses ISL1 transactivator activity. Interactions of ISL1 with MLIP1 and GCN5/KAT2A may be mutually exclusive. Predominantly expressed in the heart and skeletal muscle. Also detected in liver. As to expression, expressed in skeletal muscle.

The protein resides in the nucleus. It is found in the nucleus envelope. It localises to the PML body. The protein localises to the cytoplasm. Its subcellular location is the cytosol. The protein resides in the cell membrane. It is found in the sarcolemma. Required for myoblast differentiation into myotubes, possibly acting as a transcriptional regulator of the myogenic program. Required for cardiac adaptation to stress through integrated regulation of the AKT/mTOR pathways and FOXO1. Regulates cardiac homeostasis and plays a role in the protection against cardiac hypertrophy. Binds chromatin. May act as a transcriptional cofactor for ISL1, repressing its transcriptional activity. May also repress MYOCD transcriptional activity. The polypeptide is Muscular LMNA-interacting protein (Homo sapiens (Human)).